The chain runs to 120 residues: Chemokine vCXCL1 (120 aa).

The protein belongs to the intercrine alpha (chemokine CxC) family. In terms of assembly, interacts with host CXCR1 and CXCR2.

Acts as a functional chemokine, inducing calcium mobilization, chemotaxis, and degranulation of neutrophils. Contributes to the induction of neutrophil chemotaxis by interacting with host CXCR1 and CXCR2 receptors. In Human cytomegalovirus (strain Merlin) (HHV-5), this protein is Chemokine vCXCL1 (UL146).